Reading from the N-terminus, the 477-residue chain is Ribulose bisphosphate carboxylase large chain (477 aa).

Residues 1–2 (MS) constitute a propeptide that is removed on maturation. Pro3 carries the post-translational modification N-acetylproline. The residue at position 14 (Lys14) is an N6,N6,N6-trimethyllysine. Residues Asn123 and Thr173 each coordinate substrate. The active-site Proton acceptor is the Lys175. Lys177 is a substrate binding site. The Mg(2+) site is built by Lys201, Asp203, and Glu204. An N6-carboxylysine modification is found at Lys201. The active-site Proton acceptor is the His294. The substrate site is built by Arg295, His327, and Ser379.

Belongs to the RuBisCO large chain family. Type I subfamily. As to quaternary structure, heterohexadecamer of 8 large chains and 8 small chains; disulfide-linked. The disulfide link is formed within the large subunit homodimers. Requires Mg(2+) as cofactor. Post-translationally, the disulfide bond which can form in the large chain dimeric partners within the hexadecamer appears to be associated with oxidative stress and protein turnover.

The protein resides in the plastid. The protein localises to the chloroplast. It carries out the reaction 2 (2R)-3-phosphoglycerate + 2 H(+) = D-ribulose 1,5-bisphosphate + CO2 + H2O. The catalysed reaction is D-ribulose 1,5-bisphosphate + O2 = 2-phosphoglycolate + (2R)-3-phosphoglycerate + 2 H(+). Functionally, ruBisCO catalyzes two reactions: the carboxylation of D-ribulose 1,5-bisphosphate, the primary event in carbon dioxide fixation, as well as the oxidative fragmentation of the pentose substrate in the photorespiration process. Both reactions occur simultaneously and in competition at the same active site. This Dioscorea elephantipes (Elephant's foot yam) protein is Ribulose bisphosphate carboxylase large chain.